Reading from the N-terminus, the 457-residue chain is Glycine receptor subunit alpha-1 (457 aa).

An N-terminal signal peptide occupies residues 1 to 28 (MYSFNTLRLYLWETIVFFSLAASKEAEA). The Extracellular portion of the chain corresponds to 29 to 250 (ARSASKPMSP…RFHLERQMGY (222 aa)). Asn-66 is a glycosylation site (N-linked (GlcNAc...) asparagine). 2 residues coordinate glycine: Arg-93 and Ser-157. Residues Cys-166 and Cys-180 are joined by a disulfide bond. Positions 220 and 222 each coordinate Zn(2+). Cys-226 and Cys-237 are joined by a disulfide. Position 230-235 (230-235 (YNTGKF)) interacts with strychnine. Thr-232 contacts glycine. Residue His-243 coordinates Zn(2+). Residues 251–272 (YLIQMYIPSLLIVILSWISFWI) traverse the membrane as a helical segment. At 273–277 (NMDAA) the chain is on the cytoplasmic side. A helical transmembrane segment spans residues 278–298 (PARVGLGITTVLTMTTQSSGS). Topologically, residues 299–309 (RASLPKVSYVK) are extracellular. A helical membrane pass occupies residues 310 to 330 (AIDIWMAVCLLFVFSALLEYA). The Cytoplasmic segment spans residues 331–425 (AVNFVSRQHK…FIQRAKKIDK (95 aa)). The segment at 391-410 (KGANNSNTTNPPPAPSKSPE) is disordered. The chain crosses the membrane as a helical span at residues 426 to 446 (ISRIGFPMAFLIFNMFYWIIY). Over 447 to 457 (KIVRREDVHNQ) the chain is Extracellular.

It belongs to the ligand-gated ion channel (TC 1.A.9) family. Glycine receptor (TC 1.A.9.3) subfamily. GLRA1 sub-subfamily. As to quaternary structure, interacts with GLRB to form heteropentameric channels; this is probably the predominant form in vivo. Heteropentamer composed of four GLRA1 subunits and one GLRB subunit. Heteropentamer composed of two GLRA1 and three GLRB. Heteropentamer composed of three GLRA1 and two GLRB. Homopentamer (in vitro). Both homopentamers and heteropentamers form functional ion channels, but their characteristics are subtly different. As to expression, detected on spinal cord neurons (at protein level). Detected in spinal cord.

Its subcellular location is the postsynaptic cell membrane. The protein localises to the synapse. It is found in the perikaryon. The protein resides in the cell projection. It localises to the dendrite. Its subcellular location is the cell membrane. The enzyme catalyses chloride(in) = chloride(out). With respect to regulation, channel opening is triggered by extracellular glycine. Channel characteristics depend on the subunit composition; heteropentameric channels are activated by lower glycine levels and display faster desensitization. Subunit of heteromeric glycine-gated chloride channels. Plays an important role in the down-regulation of neuronal excitability. Contributes to the generation of inhibitory postsynaptic currents. Channel activity is potentiated by ethanol. Potentiation of channel activity by intoxicating levels of ethanol contribute to the sedative effects of ethanol. The protein is Glycine receptor subunit alpha-1 (GLRA1) of Bos taurus (Bovine).